Consider the following 178-residue polypeptide: GTP-dependent dephospho-CoA kinase (178 aa).

Residues D43, I44, V45, D62, K64, and E120 each coordinate GTP.

It belongs to the GTP-dependent DPCK family.

The enzyme catalyses 3'-dephospho-CoA + GTP = GDP + CoA + H(+). It functions in the pathway cofactor biosynthesis; coenzyme A biosynthesis. Functionally, catalyzes the GTP-dependent phosphorylation of the 3'-hydroxyl group of dephosphocoenzyme A to form coenzyme A (CoA). This Natronomonas pharaonis (strain ATCC 35678 / DSM 2160 / CIP 103997 / JCM 8858 / NBRC 14720 / NCIMB 2260 / Gabara) (Halobacterium pharaonis) protein is GTP-dependent dephospho-CoA kinase.